Here is a 424-residue protein sequence, read N- to C-terminus: MLDVKILRTQFEEVKEKLMQRGGDLTNIDRFEQLDKDRRRLIAEVEELKSKRNDVSQQIAVLKREKKDAEPLIAQMREVGDRIKRMDEQIRQLEAELDDLLLSIPNVPHESVPIGQSEEDNVEVRRWGEPRSFSFEPKPHWEIADRLGLLDFERAAKVAGSRFVFYKGLGARLERALINFMLDIHLDEFGYEEVLPPYLVNRASMIGTGQLPKFAEDAFHLDSEDYFLIPTAEVPVTNLHRDEILAADDLPIYYAAYSACFRAEAGSAGRDTRGLIRQHQFNKVELVKFVKPEDSYDELEKLTRQAETILQRLGLPYRVVALCTGDLGFSAAKTYDIEVWLPSYGTYREISSCSNFEAFQARRANIRFRRDPKAKPEYVHTLNGSGLAIGRTVAAILENYQQEDGSVIVPEALRPYMGNRDVIR.

Residue 231–233 participates in L-serine binding; sequence TAE. 262-264 contributes to the ATP binding site; sequence RAE. Glu-285 is an L-serine binding site. 349–352 serves as a coordination point for ATP; the sequence is EISS. Position 385 (Ser-385) interacts with L-serine.

It belongs to the class-II aminoacyl-tRNA synthetase family. Type-1 seryl-tRNA synthetase subfamily. In terms of assembly, homodimer. The tRNA molecule binds across the dimer.

Its subcellular location is the cytoplasm. The enzyme catalyses tRNA(Ser) + L-serine + ATP = L-seryl-tRNA(Ser) + AMP + diphosphate + H(+). It carries out the reaction tRNA(Sec) + L-serine + ATP = L-seryl-tRNA(Sec) + AMP + diphosphate + H(+). It participates in aminoacyl-tRNA biosynthesis; selenocysteinyl-tRNA(Sec) biosynthesis; L-seryl-tRNA(Sec) from L-serine and tRNA(Sec): step 1/1. Functionally, catalyzes the attachment of serine to tRNA(Ser). Is also able to aminoacylate tRNA(Sec) with serine, to form the misacylated tRNA L-seryl-tRNA(Sec), which will be further converted into selenocysteinyl-tRNA(Sec). This Geobacillus kaustophilus (strain HTA426) protein is Serine--tRNA ligase.